The primary structure comprises 21 residues: Fibrinogen beta chain (21 aa).

Glutamine 1 is subject to Pyrrolidone carboxylic acid. Residues 1–11 (QFPTDYDEGED) are compositionally biased toward acidic residues. Residues 1 to 21 (QFPTDYDEGEDDRPKSGLGAR) form a disordered region. Threonine 4 carries an O-linked (GalNAc...) threonine glycan. The residue at position 6 (tyrosine 6) is a Sulfotyrosine.

As to quaternary structure, heterohexamer; disulfide linked. Contains 2 sets of 3 non-identical chains (alpha, beta and gamma). The 2 heterotrimers are in head to head conformation with the N-termini in a small central domain. Post-translationally, conversion of fibrinogen to fibrin is triggered by thrombin, which cleaves fibrinopeptides A and B from alpha and beta chains, and thus exposes the N-terminal polymerization sites responsible for the formation of the soft clot.

It is found in the secreted. Its function is as follows. Cleaved by the protease thrombin to yield monomers which, together with fibrinogen alpha (FGA) and fibrinogen gamma (FGG), polymerize to form an insoluble fibrin matrix. Fibrin has a major function in hemostasis as one of the primary components of blood clots. In addition, functions during the early stages of wound repair to stabilize the lesion and guide cell migration during re-epithelialization. Was originally thought to be essential for platelet aggregation, based on in vitro studies using anticoagulated blood. However subsequent studies have shown that it is not absolutely required for thrombus formation in vivo. Enhances expression of SELP in activated platelets. Maternal fibrinogen is essential for successful pregnancy. Fibrin deposition is also associated with infection, where it protects against IFNG-mediated hemorrhage. May also facilitate the antibacterial immune response via both innate and T-cell mediated pathways. The protein is Fibrinogen beta chain (FGB) of Syncerus caffer (African buffalo).